Consider the following 628-residue polypeptide: tRNA (guanine(37)-N(1))-methyltransferase (628 aa).

S-adenosyl-L-methionine is bound by residues His-265, 303 to 304 (DL), 342 to 343 (DG), and Asn-445.

Belongs to the class I-like SAM-binding methyltransferase superfamily. TRM5/TYW2 family. Monomer.

The protein resides in the mitochondrion matrix. The protein localises to the nucleus. It is found in the cytoplasm. The enzyme catalyses guanosine(37) in tRNA + S-adenosyl-L-methionine = N(1)-methylguanosine(37) in tRNA + S-adenosyl-L-homocysteine + H(+). Specifically methylates the N1 position of guanosine-37 in various cytoplasmic and mitochondrial tRNAs. Methylation is not dependent on the nature of the nucleoside 5' of the target nucleoside. This is the first step in the biosynthesis of wybutosine (yW), a modified base adjacent to the anticodon of tRNAs and required for accurate decoding. The protein is tRNA (guanine(37)-N(1))-methyltransferase of Mycosarcoma maydis (Corn smut fungus).